A 320-amino-acid polypeptide reads, in one-letter code: Cytosolic Fe-S cluster assembly factor NUBP1 (320 aa).

N-acetylmethionine is present on M1. [4Fe-4S] cluster contacts are provided by C8, C22, C25, and C31. 62 to 69 (GKGGVGKS) lines the ATP pocket. Residues C235 and C238 each contribute to the [4Fe-4S] cluster site.

Belongs to the Mrp/NBP35 ATP-binding proteins family. NUBP1/NBP35 subfamily. As to quaternary structure, heterotetramer of 2 NUBP1 and 2 NUBP2 chains. Interacts with KIFC1. Interacts with the BBS/CCT complex subunit CCT1. [4Fe-4S] cluster is required as a cofactor.

It localises to the cytoplasm. Its subcellular location is the nucleus. The protein localises to the cell projection. The protein resides in the cytoskeleton. It is found in the cilium axoneme. It localises to the cilium basal body. Its subcellular location is the microtubule organizing center. The protein localises to the centrosome. The protein resides in the centriole. In terms of biological role, component of the cytosolic iron-sulfur (Fe/S) protein assembly (CIA) machinery. Required for maturation of extramitochondrial Fe-S proteins. The NUBP1-NUBP2 heterotetramer forms a Fe-S scaffold complex, mediating the de novo assembly of an Fe-S cluster and its transfer to target apoproteins. Implicated in the regulation of centrosome duplication. Negatively regulates cilium formation and structure. This is Cytosolic Fe-S cluster assembly factor NUBP1 from Bos taurus (Bovine).